The primary structure comprises 446 residues: Xylose isomerase 1 (446 aa).

Active-site residues include His109 and Asp112. Residues Glu240, Glu276, His279, Asp304, Asp315, Asp317, and Asp347 each coordinate Mg(2+).

The protein belongs to the xylose isomerase family. Homotetramer. Mg(2+) is required as a cofactor.

The protein resides in the cytoplasm. The catalysed reaction is alpha-D-xylose = alpha-D-xylulofuranose. This chain is Xylose isomerase 1, found in Xanthomonas campestris pv. campestris (strain 8004).